We begin with the raw amino-acid sequence, 1011 residues long: Multiple C2 domain and transmembrane region protein 7 (1011 aa).

Residues 1 to 110 (MMMSNLKLGV…PHSDAVVLHF (110 aa)) form the C2 1 domain. Residues 178 to 195 (QEHQHQHPQGPNQSSSLA) show a composition bias toward polar residues. The tract at residues 178 to 201 (QEHQHQHPQGPNQSSSLAAEQDNH) is disordered. C2 domains lie at 261 to 381 (IHKD…PQWY), 421 to 546 (VDCS…ARWY), and 587 to 709 (YSSD…THSY). D294, D300, D347, D349, and D354 together coordinate Ca(2+). Helical transmembrane passes span 812–832 (MMTV…ICSW), 846–866 (LMLV…MFLI), and 954–974 (IFVI…IQIV).

The protein belongs to the MCTP family. Ca(2+) is required as a cofactor. Accumulates specifically in hydathodes. Restricted the basal meristem of roots. Observed in flowers.

The protein resides in the membrane. Its subcellular location is the vesicle. It is found in the endosome membrane. Functionally, may function as a signaling molecule by regulating the trafficking of other regulators. The sequence is that of Multiple C2 domain and transmembrane region protein 7 from Arabidopsis thaliana (Mouse-ear cress).